Reading from the N-terminus, the 643-residue chain is Macrolide export ATP-binding/permease protein MacB (643 aa).

The ABC transporter domain maps to 4–242 (IEIKELNRYF…VNNQSKAKSR (239 aa)). Residue 40-47 (GQSGSGKS) participates in ATP binding. Transmembrane regions (helical) follow at residues 269 to 289 (LLTM…VALG), 523 to 543 (IAFI…LVSV), 572 to 592 (ILIC…IGGI), and 603 to 623 (VFST…GVIF).

This sequence belongs to the ABC transporter superfamily. Macrolide exporter (TC 3.A.1.122) family. As to quaternary structure, homodimer. Part of the tripartite efflux system MacAB-TolC, which is composed of an inner membrane transporter, MacB, a periplasmic membrane fusion protein, MacA, and an outer membrane component, TolC. The complex forms a large protein conduit and can translocate molecules across both the inner and outer membranes. Interacts with MacA.

It is found in the cell inner membrane. In terms of biological role, part of the tripartite efflux system MacAB-TolC. MacB is a non-canonical ABC transporter that contains transmembrane domains (TMD), which form a pore in the inner membrane, and an ATP-binding domain (NBD), which is responsible for energy generation. Confers resistance against macrolides. This is Macrolide export ATP-binding/permease protein MacB from Mannheimia succiniciproducens (strain KCTC 0769BP / MBEL55E).